The chain runs to 72 residues: UPF0154 protein BLi02038/BL02936 (72 aa).

A helical membrane pass occupies residues 4 to 24 (WVVILVGVLALLAGVALGFFI).

It belongs to the UPF0154 family.

The protein localises to the cell membrane. This Bacillus licheniformis (strain ATCC 14580 / DSM 13 / JCM 2505 / CCUG 7422 / NBRC 12200 / NCIMB 9375 / NCTC 10341 / NRRL NRS-1264 / Gibson 46) protein is UPF0154 protein BLi02038/BL02936.